The following is a 237-amino-acid chain: Aliphatic sulfonates import ATP-binding protein SsuB 1 (237 aa).

Residues 5–221 form the ABC transporter domain; sequence LMDIRVEHKA…PRDRRDPLLA (217 aa). Residue 38-45 participates in ATP binding; that stretch reads GPSGCGKS.

This sequence belongs to the ABC transporter superfamily. Aliphatic sulfonates importer (TC 3.A.1.17.2) family. The complex is composed of two ATP-binding proteins (SsuB), two transmembrane proteins (SsuC) and a solute-binding protein (SsuA).

The protein localises to the cell inner membrane. It carries out the reaction ATP + H2O + aliphatic sulfonate-[sulfonate-binding protein]Side 1 = ADP + phosphate + aliphatic sulfonateSide 2 + [sulfonate-binding protein]Side 1.. Its function is as follows. Part of the ABC transporter complex SsuABC involved in aliphatic sulfonates import. Responsible for energy coupling to the transport system. This Pseudomonas syringae pv. syringae (strain B728a) protein is Aliphatic sulfonates import ATP-binding protein SsuB 1.